We begin with the raw amino-acid sequence, 295 residues long: Reticulon-like protein 1 (295 aa).

Residues 1–50 (MSASAQHSQAQQQQQQKSCNCDLLLWRNPVQTGKYFGGSLLALLILKKVN) lie on the Cytoplasmic side of the membrane. The 201-residue stretch at 20–220 (NCDLLLWRNP…ISNLVKSKTA (201 aa)) folds into the Reticulon domain. The helical transmembrane segment at 51-73 (LITFFLKVAYTILFTTGSIEFVS) threads the bilayer. The Lumenal segment spans residues 74–142 (KLFLGQGLIT…ALFLLHKFFS (69 aa)). The chain crosses the membrane as a helical span at residues 143-163 (WFSIWTIVFVADIFTFTLPVI). Residues 164–295 (YHSYKHEIDA…LQNELEKNNA (132 aa)) lie on the Cytoplasmic side of the membrane. A phosphothreonine mark is found at Thr186 and Thr219. Over residues 219–235 (TAPVSSTAGPQTASTSK) the composition is skewed to polar residues. The interval 219–295 (TAPVSSTAGP…LQNELEKNNA (77 aa)) is disordered. Residue Ser232 is modified to Phosphoserine. A coiled-coil region spans residues 265 to 295 (STTQEFNVDELSNELKKSTKNLQNELEKNNA).

Interacts with POM33.

The protein localises to the endoplasmic reticulum membrane. The sequence is that of Reticulon-like protein 1 (RTN1) from Saccharomyces cerevisiae (strain ATCC 204508 / S288c) (Baker's yeast).